A 386-amino-acid polypeptide reads, in one-letter code: Lysophosphatidylserine lipase ABHD12 (386 aa).

At 1 to 66 (MRKRAEPVPP…YGLWSRLRMF (66 aa)) the chain is on the cytoplasmic side. Residues 67 to 87 (LIFLLGLYIAIPFLVKICPAI) traverse the membrane as a helical segment. Residues 88–386 (QTQLVFLNLV…RDFLGNTEQQ (299 aa)) lie on the Extracellular side of the membrane. Asparagine 114 carries an N-linked (GlcNAc...) asparagine glycan. The Nucleophile role is filled by serine 237. Active-site charge relay system residues include aspartate 324 and histidine 363.

The protein belongs to the serine esterase family.

The protein localises to the endoplasmic reticulum membrane. The enzyme catalyses 1-(9Z-octadecenoyl)-sn-glycero-3-phospho-L-serine + H2O = sn-glycero-3-phospho-L-serine + (9Z)-octadecenoate + H(+). It carries out the reaction 1-(9Z-octadecenoyl)-sn-glycero-3-phospho-(1'-sn-glycerol) + H2O = sn-glycero-3-phospho-(1'-sn-glycerol) + (9Z)-octadecenoate + H(+). The catalysed reaction is 1-(9Z-octadecenoyl)-sn-glycero-3-phospho-(1D-myo-inositol) + H2O = sn-glycero-3-phospho-1D-myo-inositol + (9Z)-octadecenoate + H(+). It catalyses the reaction 1-(9Z-octadecenoyl)-sn-glycero-3-phosphoethanolamine + H2O = sn-glycero-3-phosphoethanolamine + (9Z)-octadecenoate + H(+). The enzyme catalyses 1-(9Z-octadecenoyl)-sn-glycero-3-phosphocholine + H2O = 1-(9Z-octadecenoyl)-sn-glycerol + phosphocholine + H(+). It carries out the reaction 2-(9Z-octadecenoyl)-glycerol + H2O = glycerol + (9Z)-octadecenoate + H(+). The catalysed reaction is 1-hexadecanoyl-sn-glycero-3-phospho-L-serine + H2O = sn-glycero-3-phospho-L-serine + hexadecanoate + H(+). It catalyses the reaction 2-(5Z,8Z,11Z,14Z-eicosatetraenoyl)-glycerol + H2O = glycerol + (5Z,8Z,11Z,14Z)-eicosatetraenoate + H(+). The enzyme catalyses Hydrolyzes glycerol monoesters of long-chain fatty acids.. It carries out the reaction 1-decanoylglycerol + H2O = decanoate + glycerol + H(+). The catalysed reaction is 1-dodecanoylglycerol + H2O = dodecanoate + glycerol + H(+). It catalyses the reaction 1-tetradecanoylglycerol + H2O = tetradecanoate + glycerol + H(+). The enzyme catalyses 2-hexadecanoylglycerol + H2O = glycerol + hexadecanoate + H(+). It carries out the reaction 1-(9Z-octadecenoyl)-glycerol + H2O = glycerol + (9Z)-octadecenoate + H(+). The catalysed reaction is 2-(9Z,12Z-octadecadienoyl)-glycerol + H2O = (9Z,12Z)-octadecadienoate + glycerol + H(+). It catalyses the reaction 1-(5Z,8Z,11Z,14Z-eicosatetraenoyl)-glycerol + H2O = glycerol + (5Z,8Z,11Z,14Z)-eicosatetraenoate + H(+). The enzyme catalyses 1-(9Z,12Z-octadecadienoyl)-glycerol + H2O = (9Z,12Z)-octadecadienoate + glycerol + H(+). It carries out the reaction 1-hexadecanoylglycerol + H2O = glycerol + hexadecanoate + H(+). The catalysed reaction is 1-octadecanoylglycerol + H2O = octadecanoate + glycerol + H(+). It catalyses the reaction 1-octadecanoyl-2-(9,10-epoxyoctadecanoyl)-sn-glycero-3-phospho-L-serine + H2O = 9,10-epoxyoctadecanoate + 1-octadecanoyl-sn-glycero-3-phosphoserine + H(+). The enzyme catalyses 1-octadecanoyl-2-(10-hydroxyoctadecanoyl)-sn-glycero-3-phospho-L-serine + H2O = 1-octadecanoyl-sn-glycero-3-phosphoserine + 10-hydroxyoctadecanoate + H(+). It carries out the reaction 1-hexadecanoyl-2-(10-hydroxyoctadecanoyl)-sn-glycero-3-phospho-L-serine + H2O = 10-hydroxyoctadecanoate + 1-hexadecanoyl-sn-glycero-3-phospho-L-serine + H(+). Lysophosphatidylserine (LPS) lipase that mediates the hydrolysis of lysophosphatidylserine, a class of signaling lipids that regulates immunological and neurological processes. Represents a major lysophosphatidylserine lipase in the brain, thereby playing a key role in the central nervous system. Also able to hydrolyze oxidized phosphatidylserine; oxidized phosphatidylserine is produced in response to severe inflammatory stress and constitutes a proapoptotic 'eat me' signal. Also has monoacylglycerol (MAG) lipase activity: hydrolyzes 2-arachidonoylglycerol (2-AG), thereby acting as a regulator of endocannabinoid signaling pathways. Has a strong preference for very-long-chain lipid substrates; substrate specificity is likely due to improved catalysis and not improved substrate binding. In Xenopus tropicalis (Western clawed frog), this protein is Lysophosphatidylserine lipase ABHD12.